We begin with the raw amino-acid sequence, 247 residues long: uncharacterized protein (247 aa).

It localises to the mitochondrion. This is an uncharacterized protein from Schizosaccharomyces pombe (strain 972 / ATCC 24843) (Fission yeast).